A 997-amino-acid chain; its full sequence is Mannuronan C5-epimerase AlgE5 (997 aa).

7 PbH1 repeats span residues 133-155 (DRDV…DPHE), 157-179 (TINL…VADF), 180-202 (QIGG…NIVT), 204-226 (TNDF…VIQR), 257-279 (AHDV…RVYG), 280-315 (AEDV…GVSG), and 320-359 (TTGT…SVSN). Hemolysin-type calcium-binding repeat units lie at residues 388–403 (GTTG…AHET), 406–422 (GLDG…NDIL), 424–439 (GGAG…GADL), 557–573 (GHAG…DDIL), 574–590 (VGGA…GADL), 695–709 (GSAG…AADE), 712–729 (HGGA…ADVF), 828–839 (GSDGNDTLDGGS), 846–862 (GGAG…NDIL), and 864–880 (GGAG…SDIF).

It belongs to the D-mannuronate C5-epimerase family. Requires Ca(2+) as cofactor.

The protein resides in the secreted. It catalyses the reaction [(1-&gt;4)-beta-D-mannuronosyl](n) = [alginate](n). The protein operates within glycan biosynthesis; alginate biosynthesis. Its activity is regulated as follows. Inhibited by zinc. Converts beta-D-mannuronic acid (M) to alpha-L-guluronic acid (G), producing a polymer with gel-forming capacity, required for the formation of the cyst coat. This Azotobacter vinelandii protein is Mannuronan C5-epimerase AlgE5.